Consider the following 345-residue polypeptide: MVTTLQLTRPDDWHLHLRDGKMLTDIVPATGRRFARAIIMPNLRPPITTTTQALAYRKRILAAQPKNLDFEPLMTLYLTDNTIPEEITRARDSGHIYAVKLYPAGATTNADFGVTCLHKLYPVLEALQQQQLPLLIHGEVTDPAVDIFDRERVFIESHLIPLLHDFPALRVVLEHITTQEAVDFIEAAPPNIAATITPHHLLFNRNALLAGGIQPHYYCLPVLKREIHRQALVAAATSGNPKFFLGTDSAPHAKTAKETACGCAGIYSSHAALELYAEAFEEASALEKLEAFASFHGPDFYGLPRNQDTVTLIKTPWQVPESLPYGDDALIPLRGGTTVAWRLAE.

Residues His-14 and His-16 each contribute to the Zn(2+) site. Substrate-binding positions include 16 to 18 (HLR) and Asn-42. Zn(2+) is bound by residues Lys-100, His-137, and His-175. Residue Lys-100 is modified to N6-carboxylysine. Residue His-137 coordinates substrate. Leu-220 is a substrate binding site. Zn(2+) is bound at residue Asp-248. Asp-248 is an active-site residue. Positions 252 and 264 each coordinate substrate.

The protein belongs to the metallo-dependent hydrolases superfamily. DHOase family. Class II DHOase subfamily. In terms of assembly, homodimer. Zn(2+) serves as cofactor.

It catalyses the reaction (S)-dihydroorotate + H2O = N-carbamoyl-L-aspartate + H(+). The protein operates within pyrimidine metabolism; UMP biosynthesis via de novo pathway; (S)-dihydroorotate from bicarbonate: step 3/3. Its function is as follows. Catalyzes the reversible cyclization of carbamoyl aspartate to dihydroorotate. The polypeptide is Dihydroorotase (Nitrosococcus oceani (strain ATCC 19707 / BCRC 17464 / JCM 30415 / NCIMB 11848 / C-107)).